Consider the following 154-residue polypeptide: Nascent polypeptide-associated complex subunit beta (154 aa).

The NAC-A/B domain occupies 33 to 98; sequence EQDDTKLIEA…PQEKNVTQLI (66 aa). The segment at 125–154 is disordered; that stretch reads APTELNAGAPAGGDEGIPDLIDGEKFDEVE.

Belongs to the NAC-beta family. As to quaternary structure, part of the nascent polypeptide-associated complex (NAC), consisting of EGD2 and EGD1. NAC associates with ribosomes via EGD1.

It localises to the cytoplasm. The protein resides in the nucleus. Its function is as follows. Component of the nascent polypeptide-associated complex (NAC), a dynamic component of the ribosomal exit tunnel, protecting the emerging polypeptides from interaction with other cytoplasmic proteins to ensure appropriate nascent protein targeting. The NAC complex also promotes mitochondrial protein import by enhancing productive ribosome interactions with the outer mitochondrial membrane and blocks the inappropriate interaction of ribosomes translating non-secretory nascent polypeptides with translocation sites in the membrane of the endoplasmic reticulum. EGD1 may act as a transcription factor that exert a negative effect on the expression of several genes that are transcribed by RNA polymerase II. The protein is Nascent polypeptide-associated complex subunit beta (EGD1) of Scheffersomyces stipitis (strain ATCC 58785 / CBS 6054 / NBRC 10063 / NRRL Y-11545) (Yeast).